Here is a 105-residue protein sequence, read N- to C-terminus: Transcription factor S (105 aa).

Positions 5, 8, 21, 24, 66, 69, 94, and 97 each coordinate Zn(2+). Residues 5 to 24 form a C4-type zinc finger; sequence CPKCNNIMLPKNGRLKCTVC. Residues 62–102 form a TFIIS-type zinc finger; the sequence is TRIECPSCGNMEASWWLQQTRCADEPETRFYKCKKCGHTWR.

This sequence belongs to the archaeal RpoM/eukaryotic RPA12/RPB9/RPC11 RNA polymerase family.

Induces RNA cleavage activity in the RNA polymerase. In its presence, the cleavage activity of the RNA polymerase truncates the RNA back to position +15 in a stepwise manner by releasing mainly dinucleotides from the 3'-end of the nascent RNA. The truncated RNAs are able to continue elongation. Involved in transcriptional proofreading and fidelity. Misincorporation of nucleotides during elongation of transcription leads to arrested elongation complexes which are rescued by TFS-promoted removal of a dinucleotide from the 3'-end. TFS is able to induce a cleavage resynthesis cycle in stalled elongation complexes (resulting from the next missing nucleotide or a reduced incorporation rate of a wrong nucleotide) preventing misincorporation and enabling proofreading in a post-incorporation manner. Pausing of elongation complexes is the main determinant of TFS-induced RNA cleavage. This chain is Transcription factor S, found in Methanothermococcus thermolithotrophicus (Methanococcus thermolithotrophicus).